Consider the following 266-residue polypeptide: Non-structural maintenance of chromosomes element 1 homolog (266 aa).

The interaction with NSMCE3 stretch occupies residues 1 to 102; sequence MQGSTRRMGV…SISKMATDFA (102 aa). The RING-type; atypical zinc-finger motif lies at 191 to 232; the sequence is CNICHSLLIQGQSCETCGIRMHLPCVAKYFQSNAEPRCPHCN. Residues 246 to 266 form a disordered region; sequence EKERESGVLKSNKKSLRSRQH. At Ser-251 the chain carries Phosphoserine. The span at 256 to 266 shows a compositional bias: basic residues; the sequence is SNKKSLRSRQH.

This sequence belongs to the NSE1 family. As to quaternary structure, component of the SMC5-SMC6 complex which consists at least of SMC5, SMC6, NSMCE2, NSMCE1, NSMCE4A or EID3 and NSMCE3. NSMCE1, NSMCE4A or EID3 and NSMCE3 probably form a subcomplex that bridges the head domains of the SMC5-SMC6 heterodimer. Interacts with NSMCE3. Interacts with MAGEF1. In terms of processing, ubiquitinated.

It localises to the nucleus. The protein localises to the chromosome. It is found in the telomere. The enzyme catalyses S-ubiquitinyl-[E2 ubiquitin-conjugating enzyme]-L-cysteine + [acceptor protein]-L-lysine = [E2 ubiquitin-conjugating enzyme]-L-cysteine + N(6)-ubiquitinyl-[acceptor protein]-L-lysine.. Its function is as follows. RING-type zinc finger-containing E3 ubiquitin ligase that assembles with melanoma antigen protein (MAGE) to catalyze the direct transfer of ubiquitin from E2 ubiquitin-conjugating enzyme to a specific substrate. Within MAGE-RING ubiquitin ligase complex, MAGE stimulates and specifies ubiquitin ligase activity likely through recruitment and/or stabilization of the E2 ubiquitin-conjugating enzyme at the E3:substrate complex. Involved in maintenance of genome integrity, DNA damage response and DNA repair. NSMCE3/MAGEG1 and NSMCE1 ubiquitin ligase are components of SMC5-SMC6 complex and may positively regulate homologous recombination-mediated DNA repair. MAGEF1-NSMCE1 ubiquitin ligase promotes proteasomal degradation of MMS19, a key component of the cytosolic iron-sulfur protein assembly (CIA) machinery. Down-regulation of MMS19 impairs the activity of several DNA repair and metabolism enzymes such as ERCC2/XPD, FANCJ, RTEL1 and POLD1 that require iron-sulfur clusters as cofactors. The polypeptide is Non-structural maintenance of chromosomes element 1 homolog (Homo sapiens (Human)).